We begin with the raw amino-acid sequence, 244 residues long: MRFDIVTLFPDCFTSVLSSGLLGKALAKQIAQVNLVNPRDFTTDKHRKVDDEPYGGGVGMLMKPEPIFSAVESLPILERREVILMSPQGQTIDQPLLRELVSNYEQLVVICGHYEGVDDRVLHLVTREVSLGDFILTGGEIPAMALINGVVRLLPGTVAKTESLTAESFEEGLLDYPQYTRPANFRGWKVPDVLLSGNHAAISQWRYEQQIKRTSDRRPDLLEKWQQEKKPGSREQGSREQGEK.

S-adenosyl-L-methionine-binding positions include Gly-112 and 131 to 136; that span reads LGDFIL. The interval 211–244 is disordered; the sequence is IKRTSDRRPDLLEKWQQEKKPGSREQGSREQGEK.

It belongs to the RNA methyltransferase TrmD family. Homodimer.

It is found in the cytoplasm. The catalysed reaction is guanosine(37) in tRNA + S-adenosyl-L-methionine = N(1)-methylguanosine(37) in tRNA + S-adenosyl-L-homocysteine + H(+). Functionally, specifically methylates guanosine-37 in various tRNAs. The polypeptide is tRNA (guanine-N(1)-)-methyltransferase (Trichormus variabilis (strain ATCC 29413 / PCC 7937) (Anabaena variabilis)).